An 83-amino-acid chain; its full sequence is MENDAGENVDLYVPRKCSASNRIIHAKDHASVQLTIVDVDPETGRQTDGSKTYAICGEIRRMGESDDCIVRLAKKDGIITKNF.

It belongs to the eukaryotic ribosomal protein eS21 family. Component of the 40S small ribosomal subunit. Interacts with sta.

Its subcellular location is the cytoplasm. It localises to the cytosol. The protein localises to the rough endoplasmic reticulum. Its function is as follows. May be an associated component of the ribosome rather than a core structural subunit. May act as a translation initiation factor. Has a role in regulation of cell proliferation in the hematopoietic organs and the imaginal disks of larva. This chain is Small ribosomal subunit protein eS21 (RpS21), found in Drosophila simulans (Fruit fly).